The following is a 121-amino-acid chain: Basic phospholipase A2 BmjeTX-I (121 aa).

Intrachain disulfides connect Cys26–Cys114, Cys28–Cys45, Cys44–Cys95, Cys50–Cys121, Cys51–Cys88, Cys58–Cys82, and Cys76–Cys86. Residues Tyr27, Gly29, and Gly31 each contribute to the Ca(2+) site. Residue His48 is part of the active site. Residue Asp49 coordinates Ca(2+). Asp89 is a catalytic residue.

The cofactor is Ca(2+). As to expression, expressed by the venom gland.

Its subcellular location is the secreted. The catalysed reaction is a 1,2-diacyl-sn-glycero-3-phosphocholine + H2O = a 1-acyl-sn-glycero-3-phosphocholine + a fatty acid + H(+). Functionally, snake venom phospholipase A2 (PLA2) that induces a slight blockade of neuromuscular contraction in an indirectly stimulated chick biventer cervicis nerve-muscle preparation. Does not inhibit contraction of chick biventer cervicic nerve-muscle preparation in response to treatment with acetylcholine or KCl. The neuromuscular blockade is mediated by inhibitory action at the presynaptic motor nerve endings. Lyses skeletal myoblasts and myotubes in vitro, and intramuscular injection causes local muscle necrosis. Induces edema in the mouse foot pad. Induces a transient increase of IL-6 levels. PLA2 catalyzes the calcium-dependent hydrolysis of the 2-acyl groups in 3-sn-phosphoglycerides. The polypeptide is Basic phospholipase A2 BmjeTX-I (Bothrops marajoensis (Marajo lancehead)).